Here is a 539-residue protein sequence, read N- to C-terminus: uncharacterized protein (539 aa).

This sequence belongs to the transposase 25 family.

This is an uncharacterized protein from Sinorhizobium fredii (strain NBRC 101917 / NGR234).